The primary structure comprises 364 residues: Chaperone protein DnaJ 1 (364 aa).

A J domain is found at 7 to 71 (DYYEILGVNR…ERRSEYDAIL (65 aa)). The CR-type zinc-finger motif lies at 124–200 (GCEKEIIYSR…CYGRGRVSAQ (77 aa)). Residues Cys137, Cys140, Cys154, Cys157, Cys174, Cys177, Cys188, and Cys191 each coordinate Zn(2+). 4 CXXCXGXG motif repeats span residues 137–144 (CPVCEGMG), 154–161 (CHACNGEG), 174–181 (CSVCKGKG), and 188–195 (CPTCYGRG).

This sequence belongs to the DnaJ family. In terms of assembly, homodimer. Zn(2+) is required as a cofactor.

The protein localises to the cytoplasm. Participates actively in the response to hyperosmotic and heat shock by preventing the aggregation of stress-denatured proteins and by disaggregating proteins, also in an autonomous, DnaK-independent fashion. Unfolded proteins bind initially to DnaJ; upon interaction with the DnaJ-bound protein, DnaK hydrolyzes its bound ATP, resulting in the formation of a stable complex. GrpE releases ADP from DnaK; ATP binding to DnaK triggers the release of the substrate protein, thus completing the reaction cycle. Several rounds of ATP-dependent interactions between DnaJ, DnaK and GrpE are required for fully efficient folding. Also involved, together with DnaK and GrpE, in the DNA replication of plasmids through activation of initiation proteins. The polypeptide is Chaperone protein DnaJ 1 (Aquifex aeolicus (strain VF5)).